Here is a 362-residue protein sequence, read N- to C-terminus: Flotillin-like protein FloA 2 (362 aa).

Residues 24-44 (TALLIGALVIFAGIVVVLFIF) traverse the membrane as a helical segment.

Belongs to the flotillin-like FloA family. As to quaternary structure, homooligomerizes.

It localises to the cell membrane. The protein localises to the membrane raft. Found in functional membrane microdomains (FMM) that may be equivalent to eukaryotic membrane rafts. FMMs are highly dynamic and increase in number as cells age. Flotillins are thought to be important factors in membrane fluidity. This Rhodopirellula baltica (strain DSM 10527 / NCIMB 13988 / SH1) protein is Flotillin-like protein FloA 2.